We begin with the raw amino-acid sequence, 192 residues long: Holliday junction branch migration complex subunit RuvA (192 aa).

Positions 1-64 (MIGRLTGILA…EDGHYLYGFL (64 aa)) are domain I. Residues 65 to 143 (TEAERFAFRQ…DATGVSLHPA (79 aa)) are domain II. Residues 144–149 (VDDSKQ) form a flexible linker region. Residues 149–192 (QDISNALLALGYNEKEAASAMKQLPADVSTSDGIRAALKLLSKV) form a domain III region.

This sequence belongs to the RuvA family. As to quaternary structure, homotetramer. Forms an RuvA(8)-RuvB(12)-Holliday junction (HJ) complex. HJ DNA is sandwiched between 2 RuvA tetramers; dsDNA enters through RuvA and exits via RuvB. An RuvB hexamer assembles on each DNA strand where it exits the tetramer. Each RuvB hexamer is contacted by two RuvA subunits (via domain III) on 2 adjacent RuvB subunits; this complex drives branch migration. In the full resolvosome a probable DNA-RuvA(4)-RuvB(12)-RuvC(2) complex forms which resolves the HJ.

It localises to the cytoplasm. Functionally, the RuvA-RuvB-RuvC complex processes Holliday junction (HJ) DNA during genetic recombination and DNA repair, while the RuvA-RuvB complex plays an important role in the rescue of blocked DNA replication forks via replication fork reversal (RFR). RuvA specifically binds to HJ cruciform DNA, conferring on it an open structure. The RuvB hexamer acts as an ATP-dependent pump, pulling dsDNA into and through the RuvAB complex. HJ branch migration allows RuvC to scan DNA until it finds its consensus sequence, where it cleaves and resolves the cruciform DNA. The chain is Holliday junction branch migration complex subunit RuvA from Dechloromonas aromatica (strain RCB).